We begin with the raw amino-acid sequence, 209 residues long: MQSKFIVIEGLDGAGKSTAISFVRKYLEKNNLAAIYTREPGGTKIAEELRNLVLHNKYDEEIHSDSELLMIYAGRVQHYRNLIAPALEKGINVVSDRFYWSSMAYQGGGRGVELSKIRALNDNFLNGCEPDLVIYLDIDPILGLQRAQKVGSPDRIEKAGLEFFNRTRKVFKDLVKDSDNAIEIDAAKSIQEVEKQIYLILDKHFNFQN.

10–17 (GLDGAGKS) is an ATP binding site.

It belongs to the thymidylate kinase family.

It catalyses the reaction dTMP + ATP = dTDP + ADP. In terms of biological role, phosphorylation of dTMP to form dTDP in both de novo and salvage pathways of dTTP synthesis. In Francisella tularensis subsp. tularensis (strain FSC 198), this protein is Thymidylate kinase.